The following is a 793-amino-acid chain: Serine/threonine-protein phosphatase BSU1 (793 aa).

Kelch repeat units lie at residues 53–109 (STTA…LYGT), 110–160 (LILI…IAAQ), 214–262 (IFLL…VFGG), 264–314 (KLHV…NQYQ), and 329–388 (HLYV…EASS). Ser-395 and Ser-444 each carry phosphoserine. Mn(2+)-binding residues include Asp-510, His-512, Asp-544, and Asn-576. His-577 serves as the catalytic Proton donor. Mn(2+)-binding residues include His-629 and His-707. Ser-764 bears the Phosphoserine mark.

Belongs to the PPP phosphatase family. BSU subfamily. In terms of assembly, interacts with CDG1, CDL1 and ASK7/BIN2. The cofactor is Mn(2+). Phosphorylated at Ser-395 and Ser-444. Phosphorylated at Ser-764 by CDG1 and CDL1. In terms of tissue distribution, mainly expressed in young, elongating tissues. In young seedlings, it is expressed at the base of the hypocotyl, at the tip and most peripheral cell layers of cotyledons, and in the vascular cylinder of roots, particularly in the elongation zone and at the point of emergence of lateral roots. In mature plants, it is still present in the root vasculature, but almost completely absent in fully expanded stems and leaves. In flowers, it is mainly expressed in sepal veins, anther filaments, and in the style, suggesting that BSU1 is expressed in actively growing regions and apparently enriched in vascular tissues.

The protein resides in the nucleus. The enzyme catalyses O-phospho-L-seryl-[protein] + H2O = L-seryl-[protein] + phosphate. The catalysed reaction is O-phospho-L-threonyl-[protein] + H2O = L-threonyl-[protein] + phosphate. With respect to regulation, activated by phosphorylation at Ser-764 by CDG1. In terms of biological role, phosphatase that acts as a positive regulator of brassinosteroid (BR) signaling. Dephosphorylates BES1, a transcription factor that regulates the expression of BR-response genes, thereby playing an important role in the regulation of response to BRs. Inactivates the negative regulator of BR signaling ASK7/BIN2 by dephosphorylation at 'Tyr-200'. The chain is Serine/threonine-protein phosphatase BSU1 (BSU1) from Arabidopsis thaliana (Mouse-ear cress).